We begin with the raw amino-acid sequence, 241 residues long: Fatty acid metabolism regulator protein (241 aa).

Residues 11-79 enclose the HTH gntR-type domain; that stretch reads QSPAALAEEY…HGKPTKVNNI (69 aa). A DNA-binding region (H-T-H motif) is located at residues 39 to 58; it reads ERDLADKIGVTRTTLREVLQ.

In terms of assembly, homodimer.

The protein localises to the cytoplasm. Multifunctional regulator of fatty acid metabolism. This Haemophilus influenzae (strain PittEE) protein is Fatty acid metabolism regulator protein.